The primary structure comprises 20 residues: Mite allergen Der p 6 (20 aa).

Positions 1-20 (AIGXQPAAEAEAPFQISLMK) constitute a Peptidase S1 domain.

It belongs to the peptidase S1 family.

Its subcellular location is the secreted. Protease that shows specificity similar to chymotrypsin. The polypeptide is Mite allergen Der p 6 (DERP6) (Dermatophagoides pteronyssinus (European house dust mite)).